The following is a 148-amino-acid chain: Probable transporter PD_1893 (148 aa).

4 helical membrane passes run 11 to 31 (FTVALAAGLLFGFGLALSEMI), 48 to 68 (NPSLLFVLGSALAVAFPGMAL), 93 to 113 (IVFGSAIFGTGWGLTGLCPGP), and 118 to 138 (LSTGLGSVLLFVAAMAAGMII).

Belongs to the TsuA/YedE (TC 9.B.102) family.

The protein localises to the cell inner membrane. This chain is Probable transporter PD_1893, found in Xylella fastidiosa (strain Temecula1 / ATCC 700964).